Reading from the N-terminus, the 377-residue chain is Nitric oxide reductase FlRd-NAD(+) reductase (377 aa).

Belongs to the FAD-dependent oxidoreductase family. The cofactor is FAD.

The protein localises to the cytoplasm. It carries out the reaction 2 reduced [nitric oxide reductase rubredoxin domain] + NAD(+) + H(+) = 2 oxidized [nitric oxide reductase rubredoxin domain] + NADH. The protein operates within nitrogen metabolism; nitric oxide reduction. Functionally, one of at least two accessory proteins for anaerobic nitric oxide (NO) reductase. Reduces the rubredoxin moiety of NO reductase. The sequence is that of Nitric oxide reductase FlRd-NAD(+) reductase from Shigella dysenteriae serotype 1 (strain Sd197).